Reading from the N-terminus, the 497-residue chain is tRNA (adenine(58)-N(1))-methyltransferase non-catalytic subunit TRM6 (497 aa).

The interval 69–102 (TNGGSLQPKKKKEEPTSETKEAGTDNRNIIDDGK) is disordered. Positions 79–102 (KKEEPTSETKEAGTDNRNIIDDGK) are enriched in basic and acidic residues. The tract at residues 94-104 (NRNIIDDGKSQ) is substrate. Residue T107 is modified to Phosphothreonine. 2 substrate regions span residues 145 to 154 (KYIKKKKKKY) and 175 to 182 (REPGKINH). The tract at residues 276-354 (SSEPKDIASV…EKQRRQEEQK (79 aa)) is disordered. Residues S298 and S305 each carry the phosphoserine modification. Over residues 311-354 (ESNHPEEQERMEIVSQDPDYKEPKESGSKKDYIQEKQRRQEEQK) the composition is skewed to basic and acidic residues. Positions 349 and 377 each coordinate substrate. 2 substrate regions span residues 415 to 423 (RERGGVINL) and 434 to 441 (QVLPDRSH). Positions 468–497 (PSLKSSTSTLESHKTEEPAAKKRKCPESDS) are disordered. A compositionally biased stretch (basic and acidic residues) spans 478-497 (ESHKTEEPAAKKRKCPESDS).

The protein belongs to the TRM6/GCD10 family. In terms of assembly, heterotetramer; composed of two copies of TRMT6 and two copies of TRMT61A.

It is found in the nucleus. In terms of biological role, substrate-binding subunit of tRNA (adenine-N(1)-)-methyltransferase, which catalyzes the formation of N(1)-methyladenine at position 58 (m1A58) in initiator methionyl-tRNA. Together with the TRMT61A catalytic subunit, part of a mRNA N(1)-methyltransferase complex that mediates methylation of adenosine residues at the N(1) position of a small subset of mRNAs: N(1) methylation takes place in tRNA T-loop-like structures of mRNAs and is only present at low stoichiometries. The protein is tRNA (adenine(58)-N(1))-methyltransferase non-catalytic subunit TRM6 (TRMT6) of Bos taurus (Bovine).